Reading from the N-terminus, the 223-residue chain is Small ribosomal subunit protein uS3 (223 aa).

The KH type-2 domain maps to 39–115 (IRKYIEKNLA…RVFINIVEIK (77 aa)).

This sequence belongs to the universal ribosomal protein uS3 family. In terms of assembly, part of the 30S ribosomal subunit. Forms a tight complex with proteins S10 and S14.

Functionally, binds the lower part of the 30S subunit head. Binds mRNA in the 70S ribosome, positioning it for translation. The protein is Small ribosomal subunit protein uS3 of Leuconostoc mesenteroides subsp. mesenteroides (strain ATCC 8293 / DSM 20343 / BCRC 11652 / CCM 1803 / JCM 6124 / NCDO 523 / NBRC 100496 / NCIMB 8023 / NCTC 12954 / NRRL B-1118 / 37Y).